Consider the following 215-residue polypeptide: Meiotic chromosome segregation protein P8B7.28c (215 aa).

A disordered region spans residues 159–202 (TINSEYADDVSDNTDEERTESKGQQESNSAEEYDDDDSDEDRME). 2 stretches are compositionally biased toward acidic residues: residues 164–176 (YADDVSDNTDEER) and 187–201 (SAEEYDDDDSDEDRM).

Its subcellular location is the nucleus. The protein localises to the nucleolus. Its function is as follows. Required for meiotic chromosome segregation. This is Meiotic chromosome segregation protein P8B7.28c from Schizosaccharomyces pombe (strain 972 / ATCC 24843) (Fission yeast).